A 429-amino-acid chain; its full sequence is Glycogenin-1 (429 aa).

Residues Leu-8, Thr-10, Asn-11, Tyr-14, and Arg-76 each coordinate UDP. Residues Leu-8, Thr-10, Asn-11, Tyr-14, Arg-76, Lys-85, Asp-101, Ala-102, Asp-103, Asn-132, Ser-133, Asp-159, Asp-162, and Gln-163 each coordinate UDP-alpha-D-glucose. Asp-101, Ala-102, and Asp-103 together coordinate UDP. Asp-101 is a Mn(2+) binding site. Residue Asp-103 coordinates Mn(2+). Residue Tyr-194 is glycosylated (O-linked (Glc...) tyrosine). UDP is bound by residues His-211, Gly-214, and Lys-217. His-211 is a Mn(2+) binding site. Gly-214 and Lys-217 together coordinate UDP-alpha-D-glucose. 2 disordered regions span residues 254–274 (VFPS…HPKI) and 300–338 (SYDT…QTPH). Composition is skewed to basic and acidic residues over residues 263 to 274 (EHRSHSADHPKI) and 309 to 338 (DSHR…QTPH).

The protein belongs to the glycosyltransferase 8 family. Glycogenin subfamily. In terms of assembly, forms a heterooctamer with one molecule of gyg-1 bound to each protomer of the gys-1 homotetramer. The N-terminus of gys-1 is involved in interprotomer contacts with gyg-1. The interaction with gys-1 is required for glycogen production but is not required for gys-1 intrinsic activity. The cofactor is Mn(2+). Self-glycosylated by the transfer of glucose residues from UDP-glucose to itself, forming an alpha-1,4-glycan of around 10 residues attached to Tyr-194.

The protein resides in the cytoplasm. It localises to the nucleus. The catalysed reaction is L-tyrosyl-[glycogenin] + UDP-alpha-D-glucose = alpha-D-glucosyl-L-tyrosyl-[glycogenin] + UDP + H(+). It catalyses the reaction [1,4-alpha-D-glucosyl](n)-L-tyrosyl-[glycogenin] + UDP-alpha-D-glucose = [1,4-alpha-D-glucosyl](n+1)-L-tyrosyl-[glycogenin] + UDP + H(+). It participates in glycan biosynthesis; glycogen biosynthesis. Self-glucosylating initiator of glycogen synthesis. It catalyzes the formation of a short alpha (1,4)-glucosyl chain covalently attached via a glucose 1-O-tyrosyl linkage to internal tyrosine residues and these chains act as primers for the elongation reaction catalyzed by glycogen synthase. The chain is Glycogenin-1 from Caenorhabditis elegans.